The primary structure comprises 113 residues: Putative pterin-4-alpha-carbinolamine dehydratase (113 aa).

Belongs to the pterin-4-alpha-carbinolamine dehydratase family.

It catalyses the reaction (4aS,6R)-4a-hydroxy-L-erythro-5,6,7,8-tetrahydrobiopterin = (6R)-L-erythro-6,7-dihydrobiopterin + H2O. This Nitrosococcus oceani (strain ATCC 19707 / BCRC 17464 / JCM 30415 / NCIMB 11848 / C-107) protein is Putative pterin-4-alpha-carbinolamine dehydratase.